A 713-amino-acid polypeptide reads, in one-letter code: Probable glutamate carboxypeptidase VP8 (713 aa).

The Cytoplasmic segment spans residues 1–10; that stretch reads MPHSVLARLP. The chain crosses the membrane as a helical; Signal-anchor for type II membrane protein span at residues 11-31; sequence PGSVRLVAAFGLLLLVSLLVL. Topologically, residues 32–713 are extracellular; that stretch reads HRRPGRPHVA…PTNFSSLVTP (682 aa). N66 and N311 each carry an N-linked (GlcNAc...) asparagine glycan. The catalytic stretch occupies residues 245–539; the sequence is ATSGAERLKF…EIWGLLALRL (295 aa). Zn(2+) contacts are provided by H345 and D355. The Nucleophile role is filled by E392. Residues E393, D421, and H505 each coordinate Zn(2+). N-linked (GlcNAc...) asparagine glycosylation is found at N667 and N706.

This sequence belongs to the peptidase M28 family. M28B subfamily. The cofactor is Zn(2+).

Its subcellular location is the cell membrane. It carries out the reaction Release of an unsubstituted, C-terminal glutamyl residue, typically from Ac-Asp-Glu or folylpoly-gamma-glutamates.. Its function is as follows. Involved in the regulation of meristem development and seed maturation processes. Mediates regulation of embryonic regulatory genes and genes controlling abscisic acid (ABA) biosynthesis and turnover in developing seeds. May be required for the synthesis of small signaling molecules that integrates meristem and embryo formation in seeds. This chain is Probable glutamate carboxypeptidase VP8, found in Zea mays (Maize).